The sequence spans 363 residues: UDP-N-acetylglucosamine--N-acetylmuramyl-(pentapeptide) pyrophosphoryl-undecaprenol N-acetylglucosamine transferase (363 aa).

UDP-N-acetyl-alpha-D-glucosamine contacts are provided by residues threonine 10–glycine 12, asparagine 124, arginine 161, serine 195, and glutamine 291.

This sequence belongs to the glycosyltransferase 28 family. MurG subfamily.

It is found in the cell membrane. The catalysed reaction is di-trans,octa-cis-undecaprenyl diphospho-N-acetyl-alpha-D-muramoyl-L-alanyl-D-glutamyl-meso-2,6-diaminopimeloyl-D-alanyl-D-alanine + UDP-N-acetyl-alpha-D-glucosamine = di-trans,octa-cis-undecaprenyl diphospho-[N-acetyl-alpha-D-glucosaminyl-(1-&gt;4)]-N-acetyl-alpha-D-muramoyl-L-alanyl-D-glutamyl-meso-2,6-diaminopimeloyl-D-alanyl-D-alanine + UDP + H(+). It participates in cell wall biogenesis; peptidoglycan biosynthesis. Cell wall formation. Catalyzes the transfer of a GlcNAc subunit on undecaprenyl-pyrophosphoryl-MurNAc-pentapeptide (lipid intermediate I) to form undecaprenyl-pyrophosphoryl-MurNAc-(pentapeptide)GlcNAc (lipid intermediate II). This Streptomyces avermitilis (strain ATCC 31267 / DSM 46492 / JCM 5070 / NBRC 14893 / NCIMB 12804 / NRRL 8165 / MA-4680) protein is UDP-N-acetylglucosamine--N-acetylmuramyl-(pentapeptide) pyrophosphoryl-undecaprenol N-acetylglucosamine transferase.